A 157-amino-acid chain; its full sequence is Ribonuclease H (157 aa).

In terms of domain architecture, RNase H type-1 spans 1–142; the sequence is MKKKIKIFID…CDFLAKISAK (142 aa). Mg(2+)-binding residues include D10, E48, D70, and D134.

Belongs to the RNase H family. Monomer. Mg(2+) serves as cofactor.

Its subcellular location is the cytoplasm. The enzyme catalyses Endonucleolytic cleavage to 5'-phosphomonoester.. Its function is as follows. Endonuclease that specifically degrades the RNA of RNA-DNA hybrids. This chain is Ribonuclease H, found in Wigglesworthia glossinidia brevipalpis.